The sequence spans 433 residues: Enolase (433 aa).

Q164 contacts (2R)-2-phosphoglycerate. E206 acts as the Proton donor in catalysis. Residues D243, E289, and D316 each contribute to the Mg(2+) site. Residues K341, R370, S371, and K392 each coordinate (2R)-2-phosphoglycerate. K341 functions as the Proton acceptor in the catalytic mechanism.

The protein belongs to the enolase family. Requires Mg(2+) as cofactor.

It is found in the cytoplasm. The protein localises to the secreted. It localises to the cell surface. It catalyses the reaction (2R)-2-phosphoglycerate = phosphoenolpyruvate + H2O. It participates in carbohydrate degradation; glycolysis; pyruvate from D-glyceraldehyde 3-phosphate: step 4/5. Functionally, catalyzes the reversible conversion of 2-phosphoglycerate (2-PG) into phosphoenolpyruvate (PEP). It is essential for the degradation of carbohydrates via glycolysis. In Borrelia hermsii (strain HS1 / DAH), this protein is Enolase.